Here is a 660-residue protein sequence, read N- to C-terminus: Ankyrin repeat domain-containing protein OPG023 (660 aa).

9 ANK repeats span residues 31–64 (FKNN…PLHK), 101–131 (NDFN…DLSV), 135–166 (NHRS…SVLY), 190–222 (YIIA…KPSS), 226–257 (NYCT…NTAY), 268–302 (RGIM…PYGI), 325–359 (NSDV…VVNK), 449–478 (RGET…DVNI), and 482–512 (NGYT…TLDC). The PRANC/F-box-like stretch occupies residues 578–658 (NTMFSLIFTE…PYTIKYKIFE (81 aa)).

Belongs to the orthopoxvirus OPG023 family. Interacts (via N-terminus) with host RELA. Interacts (via PRANC/F-box-like domain) with the SKP1 component of the host SCF ubiquitin ligase complex.

Functionally, substrate-specific adapter of SKP1-containing E3 ubiquitin-protein ligases which mediate the ubiquitination and subsequent proteasomal degradation of host target proteins. Prevents activation and subsequent nuclear localization of NF-kappa-B in infected cells, by targeting NF-kappa-B RELA subunit to the SCF E3 ligase complex. The polypeptide is Ankyrin repeat domain-containing protein OPG023 (OPG023) (Cynomys gunnisoni (Gunnison's prairie dog)).